A 264-amino-acid polypeptide reads, in one-letter code: Diphthine synthase (264 aa).

S-adenosyl-L-methionine-binding positions include Leu-10, Asp-87, Val-90, 115 to 116 (SI), Leu-166, Ala-209, and His-234.

The protein belongs to the diphthine synthase family. As to quaternary structure, homodimer.

It carries out the reaction 2-[(3S)-amino-3-carboxypropyl]-L-histidyl-[translation elongation factor 2] + 3 S-adenosyl-L-methionine = diphthine-[translation elongation factor 2] + 3 S-adenosyl-L-homocysteine + 3 H(+). It participates in protein modification; peptidyl-diphthamide biosynthesis. Its function is as follows. S-adenosyl-L-methionine-dependent methyltransferase that catalyzes the trimethylation of the amino group of the modified target histidine residue in translation elongation factor 2 (EF-2), to form an intermediate called diphthine. The three successive methylation reactions represent the second step of diphthamide biosynthesis. The chain is Diphthine synthase from Thermococcus gammatolerans (strain DSM 15229 / JCM 11827 / EJ3).